Here is a 169-residue protein sequence, read N- to C-terminus: Peptide methionine sulfoxide reductase MsrA (169 aa).

The active site involves cysteine 10.

It belongs to the MsrA Met sulfoxide reductase family.

It catalyses the reaction L-methionyl-[protein] + [thioredoxin]-disulfide + H2O = L-methionyl-(S)-S-oxide-[protein] + [thioredoxin]-dithiol. It carries out the reaction [thioredoxin]-disulfide + L-methionine + H2O = L-methionine (S)-S-oxide + [thioredoxin]-dithiol. Has an important function as a repair enzyme for proteins that have been inactivated by oxidation. Catalyzes the reversible oxidation-reduction of methionine sulfoxide in proteins to methionine. This chain is Peptide methionine sulfoxide reductase MsrA, found in Streptococcus uberis (strain ATCC BAA-854 / 0140J).